Reading from the N-terminus, the 42-residue chain is Kappa-actitoxin-Ael2a (42 aa).

Cystine bridges form between Cys4-Cys37, Cys6-Cys30, and Cys20-Cys38.

It belongs to the sea anemone type 3 (BDS) potassium channel toxin family.

The protein localises to the secreted. It is found in the nematocyst. Peptide with both antimicrobial and neurotoxin activities. This toxin acts both on ERG potassium channels and sodium channels. It potently and reversibly inhibits human Kv11.1/KCNH2/ERG1 (IC(50)=34 nM), rat Kv11.1/KCNH2/ERG1 and Kv11.3/KCNH7/ERG3 voltage-gated potassium channels in a similar potency. It acts as a gating-modifier toxin that shifts the voltage-dependence of ERG activation in the positive direction and suppresses its current amplitudes elicited by strong depolarizing pulses. On sodium channels, it blocks Nav1.2/SCN2A (EC(50)=31 nM), Nav1.3/SCN3A, Nav1.4/SCN4A, Nav1.5/SCN5A, Nav1.6/SCN8A, Nav1.8/SCN10A (EC(50)=92 nM). It may act by binding at site 1 or close by, only when the pore is in an open configuration. Shows antibacterial activity against the Gram-negative bacterium S.typhimurium, but not on the bacteria B.subtilis, S.aureus, and P.aeruginosa. In vivo, this toxin does not induce neurotoxic symptoms when injected into mice. This is Kappa-actitoxin-Ael2a from Anthopleura elegantissima (Green aggregating anemone).